The sequence spans 527 residues: Probable bifunctional methylthioribulose-1-phosphate dehydratase/enolase-phosphatase E1 (527 aa).

Positions 1 to 244 are methylthioribulose-1-phosphate dehydratase; the sequence is MAAAAAPAVA…AIKLHQLGLD (244 aa). Cys116 serves as a coordination point for substrate. Zn(2+)-binding residues include His134 and His136. Glu159 serves as the catalytic Proton donor/acceptor; for methylthioribulose-1-phosphate dehydratase activity. His209 contacts Zn(2+). The tract at residues 288 to 527 is enolase-phosphatase E1; it reads IVLDIEGTTT…FKTINSLSEI (240 aa). Mg(2+)-binding residues include Asp291 and Glu293. Residues 426-427 and Lys460 each bind substrate; that span reads SS. Asp486 is a binding site for Mg(2+).

This sequence in the N-terminal section; belongs to the aldolase class II family. MtnB subfamily. In the C-terminal section; belongs to the HAD-like hydrolase superfamily. MasA/MtnC family. The cofactor is Zn(2+). Mg(2+) serves as cofactor.

The catalysed reaction is 5-(methylsulfanyl)-D-ribulose 1-phosphate = 5-methylsulfanyl-2,3-dioxopentyl phosphate + H2O. It catalyses the reaction 5-methylsulfanyl-2,3-dioxopentyl phosphate + H2O = 1,2-dihydroxy-5-(methylsulfanyl)pent-1-en-3-one + phosphate. It functions in the pathway amino-acid biosynthesis; L-methionine biosynthesis via salvage pathway; L-methionine from S-methyl-5-thio-alpha-D-ribose 1-phosphate: step 2/6. The protein operates within amino-acid biosynthesis; L-methionine biosynthesis via salvage pathway; L-methionine from S-methyl-5-thio-alpha-D-ribose 1-phosphate: step 3/6. It participates in amino-acid biosynthesis; L-methionine biosynthesis via salvage pathway; L-methionine from S-methyl-5-thio-alpha-D-ribose 1-phosphate: step 4/6. The sequence is that of Probable bifunctional methylthioribulose-1-phosphate dehydratase/enolase-phosphatase E1 from Ricinus communis (Castor bean).